The sequence spans 232 residues: UPF0758 protein Amet_2289 (232 aa).

Positions 110–232 (RIKSPDDVSN…YYSLKEKSMM (123 aa)) constitute an MPN domain. Zn(2+)-binding residues include histidine 181, histidine 183, and aspartate 194. Positions 181–194 (HNHPSGDPSPSGED) match the JAMM motif motif.

This sequence belongs to the UPF0758 family.

This is UPF0758 protein Amet_2289 from Alkaliphilus metalliredigens (strain QYMF).